A 569-amino-acid polypeptide reads, in one-letter code: Urease subunit alpha (569 aa).

In terms of domain architecture, Urease spans 131–569; the sequence is GGIDTHIHFI…LPMAQRYFLL (439 aa). Positions 136, 138, and 219 each coordinate Ni(2+). The residue at position 219 (lysine 219) is an N6-carboxylysine. Residue histidine 221 coordinates substrate. The Ni(2+) site is built by histidine 248 and histidine 274. Histidine 322 serves as the catalytic Proton donor. Aspartate 362 contacts Ni(2+).

It belongs to the metallo-dependent hydrolases superfamily. Urease alpha subunit family. As to quaternary structure, heterotrimer of UreA (gamma), UreB (beta) and UreC (alpha) subunits. Three heterotrimers associate to form the active enzyme. The cofactor is Ni cation. Post-translationally, carboxylation allows a single lysine to coordinate two nickel ions.

It is found in the cytoplasm. It catalyses the reaction urea + 2 H2O + H(+) = hydrogencarbonate + 2 NH4(+). The protein operates within nitrogen metabolism; urea degradation; CO(2) and NH(3) from urea (urease route): step 1/1. The polypeptide is Urease subunit alpha (Synechococcus sp. (strain RCC307)).